A 179-amino-acid polypeptide reads, in one-letter code: Large ribosomal subunit protein uL5 (179 aa).

The protein belongs to the universal ribosomal protein uL5 family. Part of the 50S ribosomal subunit; part of the 5S rRNA/L5/L18/L25 subcomplex. Contacts the 5S rRNA and the P site tRNA. Forms a bridge to the 30S subunit in the 70S ribosome.

In terms of biological role, this is one of the proteins that bind and probably mediate the attachment of the 5S RNA into the large ribosomal subunit, where it forms part of the central protuberance. In the 70S ribosome it contacts protein S13 of the 30S subunit (bridge B1b), connecting the 2 subunits; this bridge is implicated in subunit movement. Contacts the P site tRNA; the 5S rRNA and some of its associated proteins might help stabilize positioning of ribosome-bound tRNAs. This chain is Large ribosomal subunit protein uL5, found in Burkholderia mallei (strain ATCC 23344).